Consider the following 281-residue polypeptide: CDAN1-interacting nuclease 1 (281 aa).

Thr114 carries the post-translational modification Phosphothreonine.

Its subcellular location is the nucleus. It localises to the cytoplasm. Its function is as follows. Plays a role in erythroid cell differentiation. The chain is CDAN1-interacting nuclease 1 from Homo sapiens (Human).